Here is a 646-residue protein sequence, read N- to C-terminus: Threonine--tRNA ligase (646 aa).

The TGS domain occupies 1-63 (MAQISLTFPD…ETDAKIAIHT (63 aa)). A catalytic region spans residues 247–544 (DHRKLGREME…LIENYAGKLP (298 aa)). Residues Cys-344, His-395, and His-521 each coordinate Zn(2+).

Belongs to the class-II aminoacyl-tRNA synthetase family. In terms of assembly, homodimer. Zn(2+) serves as cofactor.

Its subcellular location is the cytoplasm. It carries out the reaction tRNA(Thr) + L-threonine + ATP = L-threonyl-tRNA(Thr) + AMP + diphosphate + H(+). Its function is as follows. Catalyzes the attachment of threonine to tRNA(Thr) in a two-step reaction: L-threonine is first activated by ATP to form Thr-AMP and then transferred to the acceptor end of tRNA(Thr). Also edits incorrectly charged L-seryl-tRNA(Thr). This Cereibacter sphaeroides (strain ATCC 17029 / ATH 2.4.9) (Rhodobacter sphaeroides) protein is Threonine--tRNA ligase.